The primary structure comprises 345 residues: Methionine import ATP-binding protein MetN (345 aa).

The 240-residue stretch at 2-241 folds into the ABC transporter domain; sequence IKLNNIXKIF…PKTELAQEFI (240 aa). 38–45 serves as a coordination point for ATP; sequence GASGAGKS.

It belongs to the ABC transporter superfamily. Methionine importer (TC 3.A.1.24) family. In terms of assembly, the complex is composed of two ATP-binding proteins (MetN), two transmembrane proteins (MetI) and a solute-binding protein (MetQ).

It localises to the cell inner membrane. It carries out the reaction L-methionine(out) + ATP + H2O = L-methionine(in) + ADP + phosphate + H(+). The enzyme catalyses D-methionine(out) + ATP + H2O = D-methionine(in) + ADP + phosphate + H(+). Part of the ABC transporter complex MetNIQ involved in methionine import. Responsible for energy coupling to the transport system. The chain is Methionine import ATP-binding protein MetN from Haemophilus influenzae (strain ATCC 51907 / DSM 11121 / KW20 / Rd).